Consider the following 72-residue polypeptide: Translation initiation factor IF-1 (72 aa).

An S1-like domain is found at Met1–Lys72. Tyr60 bears the Phosphotyrosine mark.

The protein belongs to the IF-1 family. As to quaternary structure, component of the 30S ribosomal translation pre-initiation complex which assembles on the 30S ribosome in the order IF-2 and IF-3, IF-1 and N-formylmethionyl-tRNA(fMet); mRNA recruitment can occur at any time during PIC assembly.

The protein resides in the cytoplasm. In terms of biological role, one of the essential components for the initiation of protein synthesis. Stabilizes the binding of IF-2 and IF-3 on the 30S subunit to which N-formylmethionyl-tRNA(fMet) subsequently binds. Helps modulate mRNA selection, yielding the 30S pre-initiation complex (PIC). Upon addition of the 50S ribosomal subunit IF-1, IF-2 and IF-3 are released leaving the mature 70S translation initiation complex. This is Translation initiation factor IF-1 from Bacillus licheniformis (strain ATCC 14580 / DSM 13 / JCM 2505 / CCUG 7422 / NBRC 12200 / NCIMB 9375 / NCTC 10341 / NRRL NRS-1264 / Gibson 46).